Reading from the N-terminus, the 322-residue chain is Protein CCC1 (322 aa).

Over 1–99 the chain is Cytoplasmic; the sequence is MSIVALKNAV…LGFFQSVDPR (99 aa). The disordered stretch occupies residues 19-86; that stretch reads GSGGTSELGG…RNGDNGSDNE (68 aa). The segment covering 26–53 has biased composition (low complexity); that stretch reads LGGSESTPLLRGSNSNSSRHDNLSSSSS. 5 positions are modified to phosphoserine: S29, S53, S68, S71, and S83. Positions 60 to 70 are enriched in polar residues; that stretch reads NSAQDLENSPM. The helical transmembrane segment at 100-120 threads the bilayer; it reads VISDLIIGLSDGLTVPFALTA. The Vacuolar portion of the chain corresponds to 121–129; sequence GLSSLGDAK. The chain crosses the membrane as a helical span at residues 130–150; that stretch reads LVITGGFAELISGAISMGLGG. Residues 151-236 are Cytoplasmic-facing; that stretch reads YLGAKSESDY…PAENRELISA (86 aa). A helical membrane pass occupies residues 237-257; it reads VTIGGGYLLGGLVPLVPYFFV. The Vacuolar portion of the chain corresponds to 258–259; it reads SD. A helical membrane pass occupies residues 260 to 280; that stretch reads VGTGLIYSIIVMVVTLFWFGY. Residues 281–300 lie on the Cytoplasmic side of the membrane; that stretch reads VKTKLSMGSGSSTSKKVTEG. Residues 301-321 form a helical membrane-spanning segment; that stretch reads VEMVVVGGVAAGAAWFFVKLL. Position 322 (G322) is a topological domain, vacuolar.

The protein belongs to the CCC1 family.

The protein resides in the golgi apparatus membrane. It localises to the vacuole membrane. The enzyme catalyses Fe(2+)(in) = Fe(2+)(out). In terms of biological role, has a role in both calcium and manganese homeostasis. Involved in the transfer of iron and Mn(2+) from the cytosol to the vacuole for storage of these metals. The protein is Protein CCC1 (CCC1) of Saccharomyces cerevisiae (strain ATCC 204508 / S288c) (Baker's yeast).